The following is a 396-amino-acid chain: Apurinic-apyrimidinic endonuclease (396 aa).

Residues 31-41 (KGRGKIQKHIQ) show a composition bias toward basic residues. Positions 31–100 (KGRGKIQKHI…TSGETIAQKK (70 aa)) are disordered. The segment covering 55 to 70 (NQSPGTTVEETLTEEN) has biased composition (polar residues). A compositionally biased stretch (basic and acidic residues) spans 72–85 (STDKEETSKLENKP). Zn(2+) contacts are provided by His-185, His-225, Glu-261, Asp-295, His-298, His-332, Asp-345, His-347, and Glu-377.

It belongs to the AP endonuclease 2 family. Requires Zn(2+) as cofactor.

It localises to the nucleus. The polypeptide is Apurinic-apyrimidinic endonuclease (apn-1) (Caenorhabditis elegans).